Consider the following 240-residue polypeptide: Large ribosomal subunit protein bL25 (240 aa).

Disordered stretches follow at residues 1-20 and 204-240; these read MAEN…GPAR and GAAP…KAKK. Residues 204–229 are compositionally biased toward low complexity; that stretch reads GAAPAAGAAAPAGGAAPAAGAAPAKG. Over residues 230 to 240 the composition is skewed to basic and acidic residues; that stretch reads GEAKGGDKAKK.

This sequence belongs to the bacterial ribosomal protein bL25 family. CTC subfamily. As to quaternary structure, part of the 50S ribosomal subunit; part of the 5S rRNA/L5/L18/L25 subcomplex. Contacts the 5S rRNA. Binds to the 5S rRNA independently of L5 and L18.

This is one of the proteins that binds to the 5S RNA in the ribosome where it forms part of the central protuberance. The sequence is that of Large ribosomal subunit protein bL25 from Anaeromyxobacter sp. (strain K).